The chain runs to 455 residues: MAQMQREEVESVTTEKKRLDGGGGSSGAQATAFKFNAQAPEFVPRSHTTAPAPQVSPVSGYFYPCFHYNGGCIGGCGGGVCGGGGTGVGTQSSDWIYVGGGDPTAQHQHVHDPAAAFYISNPAVQFPASQNSSSSSKNLLSDDLRLKIVKQVEYQFTDMSLLANESISKHISKDPEGYVPVSYIASTKKIKALTSNHHLVSLALRSSSKLVVSEDGKKVKRTSQFTDRDREELQGRTVVAENLPDDHSYQNLEKIFGVVGNVKAIRICHPPESNSSRPKGDFLMSNKIHALIEYDNTVIADKAVEKLNDERNWRKGLRVRLLLRCSPKSVLKNRRNFDGILIDDELPSYESGEDSPRLHLTESQLDNDGDDNNVGGLWGKGRGKGRGRSPRSYAVGGGGRSFGIGLGVSLGIPSLGSHESSSPKTATKGPRMPDGTRGFTMGRGKPSISLSPNNL.

The segment covering 1–20 has biased composition (basic and acidic residues); that stretch reads MAQMQREEVESVTTEKKRLD. A disordered region spans residues 1–29; sequence MAQMQREEVESVTTEKKRLDGGGGSSGAQ. The 92-residue stretch at 138 to 229 folds into the HTH La-type RNA-binding domain; the sequence is NLLSDDLRLK…KRTSQFTDRD (92 aa). Residues 236-324 form the RRM domain; it reads RTVVAENLPD…KGLRVRLLLR (89 aa). Disordered stretches follow at residues 348–396 and 414–455; these read SYES…YAVG and SLGS…PNNL.

The protein resides in the nucleus. Its function is as follows. Transcriptional regulator. The protein is La-related protein 6C (LARP6C) of Arabidopsis thaliana (Mouse-ear cress).